A 358-amino-acid chain; its full sequence is WD repeat-containing protein 53 (358 aa).

WD repeat units follow at residues 8 to 47 (GHSS…GHMQ), 92 to 131 (VNEE…VTRS), 134 to 174 (RHSN…PVWI), 195 to 234 (LNPA…CERE), and 239 to 278 (GHTL…EKLQ). Residues 288-309 (KKAKRAACPTQGGNSRAPGAED) form a disordered region.

Belongs to the WD repeat WDR53 family.

This chain is WD repeat-containing protein 53 (Wdr53), found in Mus musculus (Mouse).